A 338-amino-acid chain; its full sequence is Bifunctional methylenetetrahydrofolate dehydrogenase/cyclohydrolase 2, mitochondrial (338 aa).

Substrate-binding positions include 89–93 and 136–138; these read YVRNK and VQL. Residues 205–207 and Arg-238 contribute to the NAD(+) site; that span reads GRS. 314-318 is a substrate binding site; the sequence is PGGVG.

The protein belongs to the tetrahydrofolate dehydrogenase/cyclohydrolase family. Requires Mg(2+) as cofactor. Widely expressed.

It is found in the mitochondrion inner membrane. The enzyme catalyses (6R)-5,10-methylene-5,6,7,8-tetrahydrofolate + NADP(+) = (6R)-5,10-methenyltetrahydrofolate + NADPH. It catalyses the reaction (6R)-5,10-methylene-5,6,7,8-tetrahydrofolate + NAD(+) = (6R)-5,10-methenyltetrahydrofolate + NADH. It carries out the reaction (6R)-5,10-methenyltetrahydrofolate + H2O = (6R)-10-formyltetrahydrofolate + H(+). It participates in one-carbon metabolism; tetrahydrofolate interconversion. In terms of biological role, bifunctional mitochondrial folate-interconverting enzyme that has both NAD/NADP-dependent methylenetetrahydrofolate dehydrogenase and methenyltetrahydrofolate cyclohydrolase activities. Its function is as follows. Has no NAD/NADP-dependent methylenetetrahydrofolate dehydrogenase activity. The protein is Bifunctional methylenetetrahydrofolate dehydrogenase/cyclohydrolase 2, mitochondrial of Rattus norvegicus (Rat).